The chain runs to 136 residues: Sec-independent protein translocase protein TatB (136 aa).

The chain crosses the membrane as a helical span at residues 1-21; that stretch reads MFDIGFPELALVAVIGLLVLG. Residues 89–136 are disordered; that stretch reads YEDMVEKNPATPMSSKASTPQTPSSGPDPQPVESHSHSDDASKQHDRS. Over residues 99-115 the composition is skewed to polar residues; it reads TPMSSKASTPQTPSSGP. Positions 122 to 136 are enriched in basic and acidic residues; it reads SHSHSDDASKQHDRS.

The protein belongs to the TatB family. As to quaternary structure, the Tat system comprises two distinct complexes: a TatABC complex, containing multiple copies of TatA, TatB and TatC subunits, and a separate TatA complex, containing only TatA subunits. Substrates initially bind to the TatABC complex, which probably triggers association of the separate TatA complex to form the active translocon.

The protein resides in the cell inner membrane. Functionally, part of the twin-arginine translocation (Tat) system that transports large folded proteins containing a characteristic twin-arginine motif in their signal peptide across membranes. Together with TatC, TatB is part of a receptor directly interacting with Tat signal peptides. TatB may form an oligomeric binding site that transiently accommodates folded Tat precursor proteins before their translocation. This Hahella chejuensis (strain KCTC 2396) protein is Sec-independent protein translocase protein TatB.